The sequence spans 303 residues: D-alanine--D-alanine ligase (303 aa).

The region spanning 99–293 (TYRFLKDIVE…FEELVEIILK (195 aa)) is the ATP-grasp domain. 125–176 (GYPCVVKPRREGSSIGVFICESDEEFQHALKEDLPRYGSVIVQKYIPGREMT) is an ATP binding site. 3 residues coordinate Mg(2+): Asp-248, Glu-260, and Asn-262.

This sequence belongs to the D-alanine--D-alanine ligase family. Requires Mg(2+) as cofactor. Mn(2+) is required as a cofactor.

It localises to the cytoplasm. The catalysed reaction is 2 D-alanine + ATP = D-alanyl-D-alanine + ADP + phosphate + H(+). The protein operates within cell wall biogenesis; peptidoglycan biosynthesis. Its function is as follows. Cell wall formation. This is D-alanine--D-alanine ligase from Thermotoga petrophila (strain ATCC BAA-488 / DSM 13995 / JCM 10881 / RKU-1).